The following is a 101-amino-acid chain: UPF0473 protein STER_1939 (101 aa).

It belongs to the UPF0473 family.

This Streptococcus thermophilus (strain ATCC BAA-491 / LMD-9) protein is UPF0473 protein STER_1939.